We begin with the raw amino-acid sequence, 396 residues long: Elongation factor Tu (396 aa).

The region spanning 10–206 (KPHVNIGTIG…AVDAYIPEPE (197 aa)) is the tr-type G domain. The tract at residues 19–26 (GHVDHGKT) is G1. Position 19 to 26 (19 to 26 (GHVDHGKT)) interacts with GTP. A Mg(2+)-binding site is contributed by Thr-26. Residues 60-64 (GITIS) are G2. The segment at 81 to 84 (DCPG) is G3. GTP is bound by residues 81–85 (DCPGH) and 136–139 (NKVD). A G4 region spans residues 136–139 (NKVD). The tract at residues 174–176 (SAL) is G5.

It belongs to the TRAFAC class translation factor GTPase superfamily. Classic translation factor GTPase family. EF-Tu/EF-1A subfamily. Monomer.

Its subcellular location is the cytoplasm. It catalyses the reaction GTP + H2O = GDP + phosphate + H(+). Functionally, GTP hydrolase that promotes the GTP-dependent binding of aminoacyl-tRNA to the A-site of ribosomes during protein biosynthesis. This Magnetococcus marinus (strain ATCC BAA-1437 / JCM 17883 / MC-1) protein is Elongation factor Tu.